Reading from the N-terminus, the 396-residue chain is Vacuolar protease A (396 aa).

An N-terminal signal peptide occupies residues 1–17; that stretch reads MKGALLTAAMLLGSAQA. Positions 18 to 70 are cleaved as a propeptide — activation peptide; that stretch reads GVHTMKLKKVPLAEQLESVPIDVQVQHLGQKYTGLRTESHTQAMFKATDAQVS. The region spanning 85-392 is the Peptidase A1 domain; the sequence is YFSEITIGTP…DLGADTVGIA (308 aa). The active site involves D103. Cysteines 116 and 121 form a disulfide. An N-linked (GlcNAc...) asparagine glycan is attached at N138. D284 is an active-site residue. C318 and C351 are joined by a disulfide. N335 carries N-linked (GlcNAc...) asparagine glycosylation.

This sequence belongs to the peptidase A1 family.

The protein localises to the vacuole. This chain is Vacuolar protease A (pep-4), found in Neurospora crassa (strain ATCC 24698 / 74-OR23-1A / CBS 708.71 / DSM 1257 / FGSC 987).